We begin with the raw amino-acid sequence, 116 residues long: NADPH-dependent 7-cyano-7-deazaguanine reductase (116 aa).

Residue Cys31 is the Thioimide intermediate of the active site. Asp38 serves as the catalytic Proton donor. Substrate contacts are provided by residues 53-55 and 72-73; these read VEL and YE.

Belongs to the GTP cyclohydrolase I family. QueF type 1 subfamily.

Its subcellular location is the cytoplasm. It catalyses the reaction 7-aminomethyl-7-carbaguanine + 2 NADP(+) = 7-cyano-7-deazaguanine + 2 NADPH + 3 H(+). It participates in tRNA modification; tRNA-queuosine biosynthesis. In terms of biological role, catalyzes the NADPH-dependent reduction of 7-cyano-7-deazaguanine (preQ0) to 7-aminomethyl-7-deazaguanine (preQ1). The polypeptide is NADPH-dependent 7-cyano-7-deazaguanine reductase (Chlorobium chlorochromatii (strain CaD3)).